A 262-amino-acid chain; its full sequence is Acyl-[acyl-carrier-protein]--UDP-N-acetylglucosamine O-acyltransferase (262 aa).

The protein belongs to the transferase hexapeptide repeat family. LpxA subfamily. Homotrimer.

The protein resides in the cytoplasm. It catalyses the reaction a (3R)-hydroxyacyl-[ACP] + UDP-N-acetyl-alpha-D-glucosamine = a UDP-3-O-[(3R)-3-hydroxyacyl]-N-acetyl-alpha-D-glucosamine + holo-[ACP]. The protein operates within glycolipid biosynthesis; lipid IV(A) biosynthesis; lipid IV(A) from (3R)-3-hydroxytetradecanoyl-[acyl-carrier-protein] and UDP-N-acetyl-alpha-D-glucosamine: step 1/6. Its function is as follows. Involved in the biosynthesis of lipid A, a phosphorylated glycolipid that anchors the lipopolysaccharide to the outer membrane of the cell. The polypeptide is Acyl-[acyl-carrier-protein]--UDP-N-acetylglucosamine O-acyltransferase (Paraburkholderia phytofirmans (strain DSM 17436 / LMG 22146 / PsJN) (Burkholderia phytofirmans)).